A 221-amino-acid chain; its full sequence is UPF0319 protein CGSHiEE_03630 (221 aa).

Residues 1 to 21 (MKLRAVVLGLATLCTSTATFA) form the signal peptide.

It belongs to the UPF0319 family.

The chain is UPF0319 protein CGSHiEE_03630 from Haemophilus influenzae (strain PittEE).